Reading from the N-terminus, the 182-residue chain is Small heat shock protein hspG1 (182 aa).

One can recognise a sHSP domain in the interval 43–182 (IKRIDIIPSM…SNSSFKININ (140 aa)).

Belongs to the small heat shock protein (HSP20) family.

The polypeptide is Small heat shock protein hspG1 (hspG1) (Dictyostelium discoideum (Social amoeba)).